A 529-amino-acid chain; its full sequence is Probable alpha-galactosidase A (529 aa).

Residues 1-19 (MKALFAAITMAHALLQTQA) form the signal peptide. Cys-42 and Cys-74 form a disulfide bridge. Asn-45, Asn-83, Asn-89, and Asn-119 each carry an N-linked (GlcNAc...) asparagine glycan. The cysteines at positions 122 and 152 are disulfide-linked. Catalysis depends on Asp-150, which acts as the Nucleophile. Asn-199 is a glycosylation site (N-linked (GlcNAc...) asparagine). Asp-208 (proton donor) is an active-site residue. Asn-351 is a glycosylation site (N-linked (GlcNAc...) asparagine). One can recognise a Ricin B-type lectin domain in the interval 408–528 (RVDAVSTGIV…GLPSGVRVSG (121 aa)). Intrachain disulfides connect Cys-425-Cys-438 and Cys-462-Cys-475.

Belongs to the glycosyl hydrolase 27 family.

Its subcellular location is the secreted. The enzyme catalyses Hydrolysis of terminal, non-reducing alpha-D-galactose residues in alpha-D-galactosides, including galactose oligosaccharides, galactomannans and galactolipids.. Hydrolyzes a variety of simple alpha-D-galactoside as well as more complex molecules such as oligosaccharides and polysaccharides. The chain is Probable alpha-galactosidase A (aglA) from Aspergillus terreus (strain NIH 2624 / FGSC A1156).